The primary structure comprises 402 residues: Tryptophan--tRNA ligase, cytoplasmic (402 aa).

The 'HIGH' region motif lies at 97–106; the sequence is PSSEALHLGH. A 'KMSKS' region motif is present at residues 280–284; the sequence is KMSAS.

It belongs to the class-I aminoacyl-tRNA synthetase family.

Its subcellular location is the cytoplasm. It is found in the cytosol. It carries out the reaction tRNA(Trp) + L-tryptophan + ATP = L-tryptophyl-tRNA(Trp) + AMP + diphosphate + H(+). The polypeptide is Tryptophan--tRNA ligase, cytoplasmic (Arabidopsis thaliana (Mouse-ear cress)).